We begin with the raw amino-acid sequence, 121 residues long: Large ribosomal subunit protein uL18 (121 aa).

Belongs to the universal ribosomal protein uL18 family. Part of the 50S ribosomal subunit; part of the 5S rRNA/L5/L18/L25 subcomplex. Contacts the 5S and 23S rRNAs.

Its function is as follows. This is one of the proteins that bind and probably mediate the attachment of the 5S RNA into the large ribosomal subunit, where it forms part of the central protuberance. The sequence is that of Large ribosomal subunit protein uL18 from Streptococcus thermophilus (strain CNRZ 1066).